A 336-amino-acid polypeptide reads, in one-letter code: tRNA N6-adenosine threonylcarbamoyltransferase (336 aa).

H114 and H118 together coordinate Fe cation. Substrate-binding positions include 136 to 140, D169, G182, D186, and N275; that span reads LVSGG. Fe cation is bound at residue D301.

It belongs to the KAE1 / TsaD family. Fe(2+) is required as a cofactor.

It is found in the cytoplasm. The catalysed reaction is L-threonylcarbamoyladenylate + adenosine(37) in tRNA = N(6)-L-threonylcarbamoyladenosine(37) in tRNA + AMP + H(+). In terms of biological role, required for the formation of a threonylcarbamoyl group on adenosine at position 37 (t(6)A37) in tRNAs that read codons beginning with adenine. Is involved in the transfer of the threonylcarbamoyl moiety of threonylcarbamoyl-AMP (TC-AMP) to the N6 group of A37, together with TsaE and TsaB. TsaD likely plays a direct catalytic role in this reaction. This Streptococcus pneumoniae serotype 19F (strain G54) protein is tRNA N6-adenosine threonylcarbamoyltransferase.